The primary structure comprises 1004 residues: Presequence protease, mitochondrial (1004 aa).

The transit peptide at 1–34 directs the protein to the mitochondrion; that stretch reads MLRNAAAGARKAVTELSQFPKPGEKLHGFTLVRS. Zn(2+) is bound at residue H84. E87 serves as the catalytic Proton acceptor. H88 is a binding site for Zn(2+). Residue E160 is part of the active site. E188 serves as a coordination point for Zn(2+).

The protein belongs to the peptidase M16 family. PreP subfamily. In terms of assembly, monomer and homodimer; homodimerization is induced by binding of the substrate. Zn(2+) serves as cofactor.

The protein resides in the mitochondrion intermembrane space. The protein localises to the mitochondrion matrix. Its function is as follows. Degrades mitochondrial transit peptides after their cleavage in the intermembrane space or in the matrix, and presequence peptides; clearance of these peptides is required to keep the presequence processing machinery running. Preferentially cleaves the N-terminal side of paired basic amino acid residues. Also degrades other unstructured peptides. May function as an ATP-dependent peptidase as opposed to a metalloendopeptidase. The protein is Presequence protease, mitochondrial (CYM1) of Gibberella zeae (strain ATCC MYA-4620 / CBS 123657 / FGSC 9075 / NRRL 31084 / PH-1) (Wheat head blight fungus).